Reading from the N-terminus, the 415-residue chain is Putative ankyrin repeat protein FPV034 (415 aa).

ANK repeat units lie at residues 12-41 (ICIK…NINT), 43-72 (KHFN…NINI), 76-105 (VGYT…IINK), 107-135 (DYRL…NINV), 139-168 (KGYT…DISI), 170-200 (NKYS…DVNI), 203-232 (HVKA…DVNI), 237-266 (GGRT…NVDS), 270-299 (VGNT…DINV), and 303-332 (FGET…SLKV).

The polypeptide is Putative ankyrin repeat protein FPV034 (ANK2) (Fowlpox virus (strain NVSL) (FPV)).